Reading from the N-terminus, the 608-residue chain is 2',5'-phosphodiesterase 12 (608 aa).

A mitochondrion-targeting transit peptide spans 1–16 (MWRLPGRSALRGVRSV). The span at 90 to 99 (AAKKSRKNRA) shows a compositional bias: basic residues. Residues 90–111 (AAKKSRKNRAHSSGGAACEATG) are disordered. Residue serine 216 is modified to Phosphoserine. Positions 350, 495, and 497 each coordinate Mg(2+). Aspartate 495 serves as the catalytic Proton donor/acceptor.

The protein belongs to the CCR4/nocturin family. The cofactor is Mg(2+).

It localises to the mitochondrion matrix. It carries out the reaction Exonucleolytic cleavage of poly(A) to 5'-AMP.. Its function is as follows. Enzyme that cleaves 2',5'-phosphodiester bond linking adenosines of the 5'-triphosphorylated oligoadenylates, triphosphorylated oligoadenylates referred as 2-5A modulates the 2-5A system. Degrades triphosphorylated 2-5A to produce AMP and ATP. Also cleaves 3',5'-phosphodiester bond of oligoadenylates. Plays a role as a negative regulator of the 2-5A system that is one of the major pathways for antiviral and antitumor functions induced by interferons (IFNs). Suppression of this enzyme increases cellular 2-5A levels and decreases viral replication in cultured small-airway epithelial cells. The protein is 2',5'-phosphodiesterase 12 (Pde12) of Mus musculus (Mouse).